The sequence spans 234 residues: MENQPKLNSSKEVIAFLAQRFPQCFSTEGEARPLKIGIFQDLVARMQGEENGLSKTQLRSALRLYTSSWRYLHGVKLGAERVDLDGNACGVLDEQHVEHARQQLEEAKARVQAQRDARKREAAENGEKREPRRPRPAGKKPTARRDGEQGSKEVRKPRAAKATSERKPRAKSETTEQRSTPVTSLEQLHLGQTVKVSAGKHAMEASVLEITKDGVRVQLSNGLAMIVRTEHLQF.

Residues 104–130 are compositionally biased toward basic and acidic residues; the sequence is LEEAKARVQAQRDARKREAAENGEKRE. A disordered region spans residues 104 to 186; sequence LEEAKARVQA…QRSTPVTSLE (83 aa). The segment covering 131–142 has biased composition (basic residues); sequence PRRPRPAGKKPT. 2 stretches are compositionally biased toward basic and acidic residues: residues 143-156 and 163-176; these read ARRD…EVRK and TSER…ETTE. Residues 177 to 186 are compositionally biased toward polar residues; that stretch reads QRSTPVTSLE.

This sequence belongs to the ProQ family.

Its subcellular location is the cytoplasm. RNA chaperone with significant RNA binding, RNA strand exchange and RNA duplexing activities. May regulate ProP activity through an RNA-based, post-transcriptional mechanism. The polypeptide is RNA chaperone ProQ (Edwardsiella ictaluri (strain 93-146)).